Consider the following 145-residue polypeptide: MSNTPLPSSFDAHPEFFQETKWQKFTRRIKEEPLIPIGYAATSYALWRAYKSMKAGDSIELNRMFRARIYGHAFTLFAIVAGGIYYGQERRQRKEFEKALQQKQDQEKRDAWLKELEIRDKEDKNWRQRHAAIEMAAKEAEKKRG.

The HIG1 domain occupies L6–E97. A run of 2 helical transmembrane segments spans residues P33–Y50 and I69–Y86. A coiled-coil region spans residues Y86 to R144.

It belongs to the RCF1 family. As to quaternary structure, associates with the respiratory chain complex III/complex IV supercomplex.

It localises to the mitochondrion membrane. In terms of biological role, cytochrome c oxidase subunit which plays a role in assembly of respiratory supercomplexes. The sequence is that of Respiratory supercomplex factor 1, mitochondrial (RCF1) from Ajellomyces capsulatus (strain NAm1 / WU24) (Darling's disease fungus).